A 199-amino-acid polypeptide reads, in one-letter code: Regulator of G-protein signaling 16 (199 aa).

2 S-palmitoyl cysteine lipidation sites follow: Cys-2 and Cys-12. The 117-residue stretch at 64–180 (SFQSLLNSKN…LKSPAYRDLA (117 aa)) folds into the RGS domain. Phosphotyrosine occurs at positions 167 and 176.

In terms of assembly, interacts with GNAI1 and GNAQ. Interacts with GNAI3, GNAI3 and GNAO1. Palmitoylated on Cys-2 and/or Cys-12. Post-translationally, phosphorylated. Phosphorylation at Tyr-167 by EGFR enhances GTPase accelerating (GAP) activity toward GNAI1. Predominantly found in the retina. Some expression has been found in the liver.

The protein resides in the membrane. Functionally, regulates G protein-coupled receptor signaling cascades. Inhibits signal transduction by increasing the GTPase activity of G protein alpha subunits, thereby driving them into their inactive GDP-bound form. Plays an important role in the phototransduction cascade by regulating the lifetime and effective concentration of activated transducin alpha. May regulate extra and intracellular mitogenic signals. The protein is Regulator of G-protein signaling 16 (Rgs16) of Rattus norvegicus (Rat).